The following is a 355-amino-acid chain: 3-isopropylmalate dehydrogenase (355 aa).

Positions 98, 108, 132, and 223 each coordinate substrate. Mg(2+) is bound by residues D223, D247, and D251. G283 to D295 contributes to the NAD(+) binding site.

Belongs to the isocitrate and isopropylmalate dehydrogenases family. LeuB type 2 subfamily. Homodimer. Requires Mg(2+) as cofactor. Mn(2+) serves as cofactor.

It is found in the cytoplasm. The catalysed reaction is (2R,3S)-3-isopropylmalate + NAD(+) = 4-methyl-2-oxopentanoate + CO2 + NADH. The protein operates within amino-acid biosynthesis; L-leucine biosynthesis; L-leucine from 3-methyl-2-oxobutanoate: step 3/4. Catalyzes the oxidation of 3-carboxy-2-hydroxy-4-methylpentanoate (3-isopropylmalate) to 3-carboxy-4-methyl-2-oxopentanoate. The product decarboxylates to 4-methyl-2 oxopentanoate. This chain is 3-isopropylmalate dehydrogenase, found in Clavibacter sepedonicus (Clavibacter michiganensis subsp. sepedonicus).